Consider the following 637-residue polypeptide: Neuroendocrine convertase 2 (637 aa).

The N-terminal stretch at 1-24 (MEGGCGSQWKAAGLLFCVMVFASA) is a signal peptide. Residues 25–108 (ERPVFTNHFL…QQEGFDRKKR (84 aa)) constitute a propeptide that is removed on maturation. Residues 128-452 (QWYLFNTGQA…YGVLDAGAMV (325 aa)) enclose the Peptidase S8 domain. Active-site charge relay system residues include D166 and H207. 2 disulfide bridges follow: C224–C375 and C316–C346. N374 is a glycosylation site (N-linked (GlcNAc...) asparagine). The active-site Charge relay system is S383. Residues 460-596 (TVPERFHCVG…TLMLHGTQSA (137 aa)) enclose the P/Homo B domain. An intrachain disulfide couples C467 to C493. N-linked (GlcNAc...) asparagine glycosylation is found at N513 and N523.

It belongs to the peptidase S8 family. Furin subfamily.

It is found in the cytoplasmic vesicle. It localises to the secretory vesicle. The protein resides in the secreted. It carries out the reaction Release of protein hormones and neuropeptides from their precursors, generally by hydrolysis of -Lys-Arg-|- bonds.. Its function is as follows. Serine endopeptidase which is involved in the processing of hormone and other protein precursors at sites comprised of pairs of basic amino acid residues. Responsible for the release of glucagon from proglucagon in pancreatic A cells. The protein is Neuroendocrine convertase 2 (Pcsk2) of Rattus norvegicus (Rat).